An 853-amino-acid chain; its full sequence is uncharacterized protein (853 aa).

Coiled-coil stretches lie at residues 313–343 (RTDEDFKEAAKKREESEKRMNKMLENRLKVA) and 480–528 (EGQV…SELI).

This is an uncharacterized protein from Ostreid herpesvirus 1 (isolate France) (OsHV-1).